Reading from the N-terminus, the 315-residue chain is Transaldolase (315 aa).

Lys131 (schiff-base intermediate with substrate) is an active-site residue.

It belongs to the transaldolase family. Type 1 subfamily. As to quaternary structure, homodimer.

The protein localises to the cytoplasm. It carries out the reaction D-sedoheptulose 7-phosphate + D-glyceraldehyde 3-phosphate = D-erythrose 4-phosphate + beta-D-fructose 6-phosphate. It functions in the pathway carbohydrate degradation; pentose phosphate pathway; D-glyceraldehyde 3-phosphate and beta-D-fructose 6-phosphate from D-ribose 5-phosphate and D-xylulose 5-phosphate (non-oxidative stage): step 2/3. Its function is as follows. Transaldolase is important for the balance of metabolites in the pentose-phosphate pathway. In Actinobacillus pleuropneumoniae serotype 3 (strain JL03), this protein is Transaldolase.